Consider the following 463-residue polypeptide: ASVEYDNEEDSPQIDARAHRPLDKRQEAAPTLRPVAPPISGTGYQPRPPKQDKQAMKKGPIIYPDAGGCKHPLDELGVLCPTGCELQTTLLKQEKTVKPVLRDLKDRVAKFSDTSTTMYQYVNMIDNKLVKTQKQRKDNDIILSEYNTEMELHYNYIKDNLDNNIPSSLRVLRAVIDSLHKKIQKLENAIATQTDYCRSPCVASCNIPVVSGRECEDIYRKGGETSEMYIIQPDPFTTPYRVYCDMETDNGGWTLIQNRQDGSVNFGRAWDEYKRGFGNIAKSGGKKYCDTPGEYWLGNDKISQLTKIGPTKVLIEMEDWNGDKVSALYGGFTIHNEGNKYQLSVSNYKGNAGNALMEGASQLYGENRTMTIHNGMYFSTYDRDNDGWLTTDPRKQCSKEDGGGWWYNRCHAANPNGRYYWGGTYSWDMAKHGTDDGIVWMNWKGSWYSMKKMSMKIKPYFPD.

The span at 1–12 shows a compositional bias: acidic residues; the sequence is ASVEYDNEEDSP. Residues 1–56 form a disordered region; sequence ASVEYDNEEDSPQIDARAHRPLDKRQEAAPTLRPVAPPISGTGYQPRPPKQDKQAM. Tyr5 bears the Sulfotyrosine mark. Positions 16–27 are enriched in basic and acidic residues; that stretch reads ARAHRPLDKRQE. 2 disulfides stabilise this stretch: Cys205/Cys289 and Cys215/Cys244. The region spanning 206–461 is the Fibrinogen C-terminal domain; sequence NIPVVSGREC…KMSMKIKPYF (256 aa). N-linked (GlcNAc...) asparagine glycosylation occurs at Asn367. Positions 384, 386, and 388 each coordinate Ca(2+). Cysteines 397 and 410 form a disulfide.

Heterohexamer; disulfide linked. Contains 2 sets of 3 non-identical chains (alpha, beta and gamma). The 2 heterotrimers are in head to head conformation with the N-termini in a small central domain. In terms of processing, conversion of fibrinogen to fibrin is triggered by thrombin, which cleaves fibrinopeptides A and B from alpha and beta chains, and thus exposes the N-terminal polymerization sites responsible for the formation of the soft clot. The soft clot is converted into the hard clot by factor XIIIA which catalyzes the epsilon-(gamma-glutamyl)lysine cross-linking between gamma chains (stronger) and between alpha chains (weaker) of different monomers.

The protein resides in the secreted. Its function is as follows. Cleaved by the protease thrombin to yield monomers which, together with fibrinogen alpha (FGA) and fibrinogen gamma (FGG), polymerize to form an insoluble fibrin matrix. Fibrin has a major function in hemostasis as one of the primary components of blood clots. The chain is Fibrinogen beta chain (FGB) from Gallus gallus (Chicken).